The following is a 468-amino-acid chain: ERO1-like protein alpha (468 aa).

The N-terminal stretch at 1-23 (MGRRWGFLIGFLVAVGLLGLGHG) is a signal peptide. Cystine bridges form between Cys35–Cys48, Cys37–Cys46, Cys85–Cys391, Cys94–Cys99, Cys94–Cys131, Cys99–Cys104, Cys208–Cys241, and Cys394–Cys397. Ser106, Ser143, and Ser145 each carry phosphoserine. FAD contacts are provided by Arg187, Thr189, and Trp200. Residues Ser252 and His255 each coordinate FAD. N-linked (GlcNAc...) asparagine glycosylation is present at Asn280. Residues Arg287 and Arg300 each coordinate FAD. The N-linked (GlcNAc...) asparagine glycan is linked to Asn384.

Belongs to the EROs family. Predominantly monomer. May function both as a monomer and a homodimer. Interacts with PDILT. Interacts with ERP44; the interaction results in retention of ERO1A in the endoplasmic reticulum. It depends on FAD as a cofactor. The Cys-94/Cys-99 and Cys-394/Cys-397 disulfide bonds constitute the redox-active center. The Cys-94/Cys-99 disulfide bond may accept electron from P4HB and funnel them to the active site disulfide Cys-394/Cys-397. The regulatory Cys-99/Cys-104 disulfide bond stabilizes the other regulatory bond Cys-94/Cys-131. Post-translationally, phosphorylated on Ser-145 by FAM20C in the Golgi which increases its enzymatic activity. Phosphorylation is induced by lactation. It is also induced by hypoxia and reductive stress.

The protein resides in the endoplasmic reticulum membrane. It is found in the golgi apparatus lumen. Its subcellular location is the secreted. It localises to the cell projection. The protein localises to the dendrite. Its activity is regulated as follows. Enzyme activity is tightly regulated to prevent the accumulation of reactive oxygen species in the endoplasmic reticulum. Reversibly down-regulated by the formation of disulfide bonds between the active site Cys-94 and Cys-131, and between Cys-99 and Cys-104. Glutathione may be required to regulate its activity in the endoplasmic reticulum. In terms of biological role, oxidoreductase involved in disulfide bond formation in the endoplasmic reticulum. Efficiently reoxidizes P4HB/PDI, the enzyme catalyzing protein disulfide formation, in order to allow P4HB to sustain additional rounds of disulfide formation. Following P4HB reoxidation, passes its electrons to molecular oxygen via FAD, leading to the production of reactive oxygen species (ROS) in the cell. Required for the proper folding of immunoglobulins. Plays an important role in ER stress-induced, CHOP-dependent apoptosis by activating the inositol 1,4,5-trisphosphate receptor IP3R1. This is ERO1-like protein alpha from Bos taurus (Bovine).